The following is a 146-amino-acid chain: Transcription antitermination protein NusB (146 aa).

This sequence belongs to the NusB family.

In terms of biological role, involved in transcription antitermination. Required for transcription of ribosomal RNA (rRNA) genes. Binds specifically to the boxA antiterminator sequence of the ribosomal RNA (rrn) operons. This is Transcription antitermination protein NusB from Herpetosiphon aurantiacus (strain ATCC 23779 / DSM 785 / 114-95).